Reading from the N-terminus, the 614-residue chain is Putative amino acid transporter AAT1 (614 aa).

11 helical membrane passes run 184–216, 222–243, 255–275, 295–311, 318–340, 360–380, 401–417, 437–459, 531–547, 553–575, and 587–613; these read VLFLCTAIGVGLLSIPYVFSELGIILSIILILL, YITTNILCMSSLEHNIFVYGNL, LIDFGLTFSFLSGYVLVLILV, RIFITIVICLLVLPLTF, INCFLVFSLFSITLTVLAVGYQS, HFFKCFNILLFSFSQQSNACF, ILIQVIFYTLFGLLGYL, SILLCKFFLCISFFFSIPLNFIA, CAAIFVTCLCAFVEFNV, FIGIFGGFTSSIISCILPNLIYY, and RYATLALLCFFSVIGLISSIVTAFIII.

It belongs to the amino acid/polyamine transporter 2 family.

The protein resides in the vacuole membrane. Putative amino acid transporter. Involved in maintaining the osmotic homeostasis of the digestive vacuole. Important for the timely development and growth of the asexual-stage parasites and male gametocyte maturation. The protein is Putative amino acid transporter AAT1 of Plasmodium berghei (strain Anka).